The chain runs to 286 residues: Thymidylate synthase (286 aa).

Residue 140-141 (RR) coordinates dUMP. C161 acts as the Nucleophile in catalysis. DUMP contacts are provided by residues 185 to 188 (RSND), N196, and 226 to 228 (HIY). (6R)-5,10-methylene-5,6,7,8-tetrahydrofolate is bound at residue D188. A285 is a (6R)-5,10-methylene-5,6,7,8-tetrahydrofolate binding site.

It belongs to the thymidylate synthase family. Bacterial-type ThyA subfamily. In terms of assembly, homodimer.

The protein resides in the cytoplasm. The enzyme catalyses dUMP + (6R)-5,10-methylene-5,6,7,8-tetrahydrofolate = 7,8-dihydrofolate + dTMP. It participates in pyrimidine metabolism; dTTP biosynthesis. Functionally, catalyzes the reductive methylation of 2'-deoxyuridine-5'-monophosphate (dUMP) to 2'-deoxythymidine-5'-monophosphate (dTMP) while utilizing 5,10-methylenetetrahydrofolate (mTHF) as the methyl donor and reductant in the reaction, yielding dihydrofolate (DHF) as a by-product. This enzymatic reaction provides an intracellular de novo source of dTMP, an essential precursor for DNA biosynthesis. The protein is Thymidylate synthase of Streptococcus thermophilus (strain ATCC BAA-250 / LMG 18311).